We begin with the raw amino-acid sequence, 170 residues long: Shikimate kinase (170 aa).

An ATP-binding site is contributed by 11 to 16 (LSGKST). Ser15 serves as a coordination point for Mg(2+). Substrate contacts are provided by Asp33, Arg57, and Gly79. Residue Arg119 coordinates ATP. Arg137 is a binding site for substrate.

Belongs to the shikimate kinase family. As to quaternary structure, monomer. The cofactor is Mg(2+).

The protein localises to the cytoplasm. It catalyses the reaction shikimate + ATP = 3-phosphoshikimate + ADP + H(+). The protein operates within metabolic intermediate biosynthesis; chorismate biosynthesis; chorismate from D-erythrose 4-phosphate and phosphoenolpyruvate: step 5/7. Functionally, catalyzes the specific phosphorylation of the 3-hydroxyl group of shikimic acid using ATP as a cosubstrate. This is Shikimate kinase from Clostridium botulinum (strain 657 / Type Ba4).